The primary structure comprises 466 residues: tRNA-2-methylthio-N(6)-dimethylallyladenosine synthase (466 aa).

The MTTase N-terminal domain maps to 2–118 (KRFYIHTIGC…LPGHIQAVAH (117 aa)). [4Fe-4S] cluster is bound by residues cysteine 11, cysteine 47, cysteine 81, cysteine 157, cysteine 161, and cysteine 164. The Radical SAM core domain occupies 143-372 (DSSGVTGFIT…LELQNRITAE (230 aa)). Residues 375-453 (RALEGRVEQV…AHSLSGIAVG (79 aa)) form the TRAM domain.

It belongs to the methylthiotransferase family. MiaB subfamily. In terms of assembly, monomer. It depends on [4Fe-4S] cluster as a cofactor.

It localises to the cytoplasm. It catalyses the reaction N(6)-dimethylallyladenosine(37) in tRNA + (sulfur carrier)-SH + AH2 + 2 S-adenosyl-L-methionine = 2-methylsulfanyl-N(6)-dimethylallyladenosine(37) in tRNA + (sulfur carrier)-H + 5'-deoxyadenosine + L-methionine + A + S-adenosyl-L-homocysteine + 2 H(+). Functionally, catalyzes the methylthiolation of N6-(dimethylallyl)adenosine (i(6)A), leading to the formation of 2-methylthio-N6-(dimethylallyl)adenosine (ms(2)i(6)A) at position 37 in tRNAs that read codons beginning with uridine. In Desulfosudis oleivorans (strain DSM 6200 / JCM 39069 / Hxd3) (Desulfococcus oleovorans), this protein is tRNA-2-methylthio-N(6)-dimethylallyladenosine synthase.